Reading from the N-terminus, the 579-residue chain is MFS-type transporter sphD (579 aa).

The segment at 17-62 (SAFAVRAEPDSEPVSEKQGTAETDAETGAGGTEVPAERNGEDDVER) is disordered. The span at 51–62 (PAERNGEDDVER) shows a compositional bias: basic and acidic residues. The next 8 membrane-spanning stretches (helical) occupy residues 73-93 (AFIG…ALGI), 110-130 (FWAN…WASI), 138-158 (PPLY…AVAQ), 168-188 (VLQG…LADM), 200-220 (LMAI…ALFA), 227-247 (WIGW…FFFL), 267-287 (WIGM…LSWA), and 294-314 (GAWQ…IFAF). Asn-335 is a glycosylation site (N-linked (GlcNAc...) asparagine). 6 helical membrane-spanning segments follow: residues 338-358 (LVGG…LPLI), 367-391 (AILS…SMML), 398-419 (YVWI…LALF), 429-449 (LGLP…LLPM), 460-480 (GLAI…GLTI), and 541-561 (FQTI…TSLF).

Belongs to the major facilitator superfamily.

It localises to the membrane. MFS-type transporter; part of the gene cluster that mediates the biosynthesis of sphingofungins, bioactive molecules acting as sphingolipid inhibitors via inhibiting serine palmitoyl transferase (SPT). In Aspergillus fumigatus (strain CBS 144.89 / FGSC A1163 / CEA10) (Neosartorya fumigata), this protein is MFS-type transporter sphD.